We begin with the raw amino-acid sequence, 222 residues long: Cytidylate kinase (222 aa).

10 to 18 (GTSSSGKSV) contributes to the ATP binding site.

It belongs to the cytidylate kinase family. Type 1 subfamily.

It localises to the cytoplasm. The catalysed reaction is CMP + ATP = CDP + ADP. It catalyses the reaction dCMP + ATP = dCDP + ADP. In Mycoplasma capricolum subsp. capricolum (strain California kid / ATCC 27343 / NCTC 10154), this protein is Cytidylate kinase.